A 704-amino-acid polypeptide reads, in one-letter code: Pentatricopeptide repeat-containing protein At1g56690, mitochondrial (704 aa).

Residues 1–12 constitute a mitochondrion transit peptide; sequence MKRLKLILRRTY. PPR repeat units follow at residues 16–46, 47–81, 82–108, 109–143, 144–170, 171–205, 206–232, 233–267, 268–294, 295–329, 330–364, 365–395, 396–430, 431–465, and 467–497; these read TGVN…LQFK, AIGS…NVVS, WNGL…MPER, NVVS…NEVS, WTVM…MPVK, DVVA…NVVT, WTTM…MPEK, TEVS…PVIA, CNAM…MEDR, DNAT…GVRP, SFPS…QFDD, DVYV…FSSK, DIIM…GTMP, NKVT…FCVT, and TVEH…MTIK. The interval 502 to 577 is type E motif; the sequence is VWGALLGACK…FPGCSWIEVG (76 aa). The type E(+) motif stretch occupies residues 578-609; sequence KKVHMFTRGGIKNHPEQAMILMMLEKTDGLLR. The tract at residues 610–704 is type DYW motif; that stretch reads EAGYSPDCSH…NGECSCRDYW (95 aa).

It belongs to the PPR family. PCMP-H subfamily.

Its subcellular location is the mitochondrion. In Arabidopsis thaliana (Mouse-ear cress), this protein is Pentatricopeptide repeat-containing protein At1g56690, mitochondrial (PCMP-H69).